Here is a 597-residue protein sequence, read N- to C-terminus: Elongation factor 4 (597 aa).

The tr-type G domain maps to 2 to 184; the sequence is KNIRNFSIIA…EIVAKIPAPT (183 aa). GTP is bound by residues 14–19 and 131–134; these read DHGKST and NKID.

Belongs to the TRAFAC class translation factor GTPase superfamily. Classic translation factor GTPase family. LepA subfamily.

The protein resides in the cell inner membrane. It catalyses the reaction GTP + H2O = GDP + phosphate + H(+). Required for accurate and efficient protein synthesis under certain stress conditions. May act as a fidelity factor of the translation reaction, by catalyzing a one-codon backward translocation of tRNAs on improperly translocated ribosomes. Back-translocation proceeds from a post-translocation (POST) complex to a pre-translocation (PRE) complex, thus giving elongation factor G a second chance to translocate the tRNAs correctly. Binds to ribosomes in a GTP-dependent manner. This Neisseria gonorrhoeae (strain ATCC 700825 / FA 1090) protein is Elongation factor 4.